The primary structure comprises 208 residues: N-hydroxyputrescine acetyltransferase (208 aa).

This sequence belongs to the IucB family.

The catalysed reaction is N-hydroxyputrescine + acetyl-CoA = N(1)-acetyl-N(1)-hydroxyputrescine + CoA. Its pathway is siderophore biosynthesis. Its function is as follows. N-acetyltransferase involved in the biosynthesis of fimsbactin A, the major siderophore produced by A.baumannii. Catalyzes the acetylation of N-hydroxyputrescine to form N(1)-acetyl-N(1)-hydroxyputrescine (ahPutr). In Acinetobacter baumannii (strain ATCC 17978 / DSM 105126 / CIP 53.77 / LMG 1025 / NCDC KC755 / 5377), this protein is N-hydroxyputrescine acetyltransferase.